The sequence spans 273 residues: Sanguinarine reductase (273 aa).

The active-site Proton donor is the Ser-153. Residues Cys-157–His-161 and Lys-175 contribute to the substrate site.

This sequence belongs to the NAD(P)-dependent epimerase/dehydratase family. In terms of assembly, monomer.

The catalysed reaction is dihydrosanguinarine + NADP(+) = sanguinarine + NADPH. It catalyses the reaction dihydrosanguinarine + NAD(+) = sanguinarine + NADH. It carries out the reaction dihydrochelirubine + NAD(+) = chelirubine + NADH. The enzyme catalyses dihydrochelirubine + NADP(+) = chelirubine + NADPH. Inhibited by iodoacetamide and irreversibly by its product, dihydrosanguinarine. Functionally, catalyzes the reduction of benzophenanthridines, preferentially sanguinarine, to the corresponding dihydroalkaloids. Involved in detoxifying the phytoalexins produced by plant itself. The sanguinarine produced by intact cells upon elicitation, after excretion and binding to cell wall elements, is rapidly reabsorbed and reduced to the less toxic dihydrosanguinarine. Can work with both NAD(P) or NAD as a hydrogen donor, but at low concentrations, the reaction velocity with NAD(P)H is threefold higher than with NADH. However, chelerythrine shows maximum conversion rates with NADH. The substrate preference is sanguinarine &gt; chelerythrine &gt; chelirubine, macarpine or 10-OH-chelerythrine. No activity with berberine or phenanthridine cations. This Eschscholzia californica (California poppy) protein is Sanguinarine reductase.